The primary structure comprises 188 residues: Elongation factor P (188 aa).

It belongs to the elongation factor P family.

It localises to the cytoplasm. Its pathway is protein biosynthesis; polypeptide chain elongation. Involved in peptide bond synthesis. Stimulates efficient translation and peptide-bond synthesis on native or reconstituted 70S ribosomes in vitro. Probably functions indirectly by altering the affinity of the ribosome for aminoacyl-tRNA, thus increasing their reactivity as acceptors for peptidyl transferase. This Leptospira interrogans serogroup Icterohaemorrhagiae serovar copenhageni (strain Fiocruz L1-130) protein is Elongation factor P.